The primary structure comprises 162 residues: Ubiquitin D (162 aa).

2 consecutive Ubiquitin-like domains span residues 3-78 (SVRT…LKVV) and 87-160 (LFLV…THCT).

This sequence belongs to the ubiquitin D family. Interacts directly with the 26S proteasome. Interacts with NUB1; this interaction facilitates the linking of UBD-conjugated target protein to the proteasome complex and accelerates its own degradation and that of its conjugates. Interacts (via ubiquitin-like 1 domain) with the spindle checkpoint protein MAD2L1 during mitosis. Present in aggresomes of proteasome inhibited cells. Interacts with HDAC6 under proteasome impairment conditions. Forms a thioester with UBA6 in cells stimulated with tumor necrosis factor-alpha (TNFa) and interferon-gamma (IFNg). Interacts with SQSTM1 and TP53/p53. In terms of processing, can be acetylated. As to expression, mostly expressed in thymus and intestine.

It is found in the nucleus. Its subcellular location is the cytoplasm. Its function is as follows. Ubiquitin-like protein modifier which can be covalently attached to target proteins and subsequently leads to their degradation by the 26S proteasome, in a NUB1-dependent manner. Conjugation to the target protein is activated by UBA6 via adenylation of its C-terminal glycine. Probably functions as a survival factor. Promotes the expression of the proteasome subunit beta type-9 (PSMB9/LMP2). Regulates TNF-alpha-induced and LPS-mediated activation of the central mediator of innate immunity NF-kappa-B by promoting TNF-alpha-mediated proteasomal degradation of ubiquitinated-I-kappa-B-alpha. Required for TNF-alpha-induced p65 nuclear translocation in renal tubular epithelial cells (RTECs). May be involved in dendritic cell (DC) maturation, the process by which immature dendritic cells differentiate into fully competent antigen-presenting cells that initiate T-cell responses. Mediates mitotic non-disjunction and chromosome instability, in long-term in vitro culture and cancers, by abbreviating mitotic phase and impairing the kinetochore localization of MAD2L1 during the prometaphase stage of the cell cycle. May be involved in the formation of aggresomes when proteasome is saturated or impaired. Mediates apoptosis in a caspase-dependent manner, especially in renal epithelium and tubular cells during renal diseases. This Mus musculus (Mouse) protein is Ubiquitin D (Ubd).